The sequence spans 302 residues: Light-independent protochlorophyllide reductase iron-sulfur ATP-binding protein (302 aa).

The segment covering 1 to 10 (MSTATISPSQ) has biased composition (polar residues). The interval 1–21 (MSTATISPSQIGRGARPDGEG) is disordered. ATP is bound by residues 46–51 (GIGKST) and Lys-75. Ser-50 lines the Mg(2+) pocket. [4Fe-4S] cluster contacts are provided by Cys-131 and Cys-165. ATP contacts are provided by residues 216–217 (NR) and 240–242 (PAL).

The protein belongs to the NifH/BchL/ChlL family. Homodimer. Protochlorophyllide reductase is composed of three subunits; BchL, BchN and BchB. It depends on [4Fe-4S] cluster as a cofactor.

It catalyses the reaction chlorophyllide a + oxidized 2[4Fe-4S]-[ferredoxin] + 2 ADP + 2 phosphate = protochlorophyllide a + reduced 2[4Fe-4S]-[ferredoxin] + 2 ATP + 2 H2O. It participates in porphyrin-containing compound metabolism; bacteriochlorophyll biosynthesis (light-independent). Its function is as follows. Component of the dark-operative protochlorophyllide reductase (DPOR) that uses Mg-ATP and reduced ferredoxin to reduce ring D of protochlorophyllide (Pchlide) to form chlorophyllide a (Chlide). This reaction is light-independent. The L component serves as a unique electron donor to the NB-component of the complex, and binds Mg-ATP. This Rubrivivax gelatinosus (strain NBRC 100245 / IL144) protein is Light-independent protochlorophyllide reductase iron-sulfur ATP-binding protein.